Reading from the N-terminus, the 432-residue chain is Alpha-galactosidase (432 aa).

Position 2–68 (2–68 (KKITFIGAGS…PSVAINSYDD (67 aa))) interacts with NAD(+). Asn-148 is a binding site for substrate. Cys-169 serves as a coordination point for Mn(2+). His-170 (proton donor) is an active-site residue. Residue His-199 coordinates Mn(2+).

The protein belongs to the glycosyl hydrolase 4 family. Homodimer. Mn(2+) serves as cofactor. NAD(+) is required as a cofactor.

The protein localises to the cytoplasm. The catalysed reaction is Hydrolysis of terminal, non-reducing alpha-D-galactose residues in alpha-D-galactosides, including galactose oligosaccharides, galactomannans and galactolipids.. In terms of biological role, catalyzes the hydrolysis of melibiose and alpha-galactosides of the raffinose family of oligosaccharides (RFOs) such as raffinose and stachyose. Cannot act on polymeric substrates such as locust bean gum. In Bacillus subtilis (strain 168), this protein is Alpha-galactosidase.